The primary structure comprises 525 residues: PE-PGRS family protein PE_PGRS47 (525 aa).

In terms of domain architecture, PE spans 1–93; that stretch reads MSFVIAAPEF…AYSYASAEAA (93 aa). Positions 506-525 are disordered; the sequence is VGGAGGLLEGQNGENGLLPS. The segment covering 514–525 has biased composition (low complexity); sequence EGQNGENGLLPS.

This sequence belongs to the mycobacterial PE family. PGRS subfamily.

It is found in the secreted. The protein resides in the cell surface. It localises to the host cytoplasm. Its subcellular location is the host cytosol. Its function is as follows. Contributes to evasion of both innate and adaptive immunity. Inhibits autophagy in infected host phagocytes and inhibits major histocompatibility complex (MHC) class II antigen presentation by mycobacteria-infected dendritic cells. Has an important role in the growth and survival of M.tuberculosis, particularly during intracellular growth and in the later chronic phase of infection. The chain is PE-PGRS family protein PE_PGRS47 from Mycobacterium tuberculosis (strain ATCC 25618 / H37Rv).